Consider the following 976-residue polypeptide: Chloride channel protein 1 (976 aa).

The Cytoplasmic portion of the chain corresponds to 1–118; it reads MQPSQSLRRG…VVRRKLGEDW (118 aa). The interval 71-92 is disordered; it reads DKEQDTGMSKKMGSSESMDSKD. Residues 77-87 show a composition bias toward low complexity; that stretch reads GMSKKMGSSES. The helical transmembrane segment at 119–150 threads the bilayer; that stretch reads IFLVLLGLLMALVSWSMDYVSAKSLQAYKWSY. Residues 151-158 are Extracellular-facing; it reads YQMQPNLP. Residues 159–179 form a helical membrane-spanning segment; it reads LQYLVWVTFPLTLILFSAVFC. Residues 180–183 are Cytoplasmic-facing; the sequence is HLIS. The segment at residues 184 to 189 is an intramembrane region (note=Loop between two helices); that stretch reads PQAVGS. The Selectivity filter part_1 signature appears at 188–192; sequence GSGIP. S189 lines the chloride pocket. Residues 190-195 constitute an intramembrane region (helical); it reads GIPEMK. The Cytoplasmic portion of the chain corresponds to 196-208; it reads TILRGVILKEYLT. Residues 209–224 constitute an intramembrane region (helical); it reads LKAFVAKVVALTAGLG. An intramembrane region (note=Loop between two helices) is located at residues 225-230; that stretch reads SGIPVG. Residues 230-234 carry the Selectivity filter part_2 motif; the sequence is GKEGP. Positions 231–246 form an intramembrane region, helical; sequence KEGPFVHIASICAAVL. The Cytoplasmic portion of the chain corresponds to 247–268; sequence SKFMSMFCGVYEQPYYYTDMLT. Intramembrane regions (helical) lie at residues 269–280 and 281–290; these read VGCAVGVGCCFG and TPLGGVLFSI. Residues 291-301 lie on the Cytoplasmic side of the membrane; sequence EVTSTYFAVRN. The chain crosses the membrane as a helical span at residues 302–321; sequence YWRGFFAATFSAFVFRVLAV. Residues 322 to 347 are Extracellular-facing; it reads WNKDAVTITALFRTNFRMDFPFDLQE. A helical transmembrane segment spans residues 348–376; the sequence is LPAFAIIGICCGFLGAVFVYLHRQVMLGV. Residues 377 to 390 lie on the Cytoplasmic side of the membrane; that stretch reads RKHKALSQFLAKHR. Residues 391 to 408 traverse the membrane as a helical segment; sequence LLYPGIVTFIIASFTFPP. The Extracellular segment spans residues 409–414; that stretch reads GIGQFM. Positions 415-418 form an intramembrane region, note=Loop between two helices; that stretch reads AGEL. An intramembrane region (helical) is located at residues 419 to 426; sequence MPREAIST. Over 427 to 457 the chain is Extracellular; that stretch reads LFDNNTWVKHVGDPESLGRSAVWIHPRVNVI. Positions 458–475 form an intramembrane region, helical; that stretch reads IIIFLFFIMKFWMSIVAT. Residues 476–482 constitute an intramembrane region (note=Loop between two helices); sequence TMPIPCG. The short motif at 482-486 is the Selectivity filter part_3 element; the sequence is GGFMP. The segment at residues 483 to 498 is an intramembrane region (helical); it reads GFMPVFVLGAAFGRLV. F484 lines the chloride pocket. At 499-521 the chain is on the extracellular side; it reads GEIMAMLFPDGILFDDIIYKILP. An intramembrane region (helical) is located at residues 522 to 538; the sequence is GGYAVIGAAALTGAVSH. An intramembrane region (note=Loop between two helices) is located at residues 539–540; sequence TV. The segment at residues 541 to 554 is an intramembrane region (helical); it reads STAVICFELTGQIA. The Extracellular segment spans residues 555–557; that stretch reads HIL. The helical intramembrane region spans 558 to 571; that stretch reads PMMVAVILANMVAQ. Residues 572–575 constitute an intramembrane region (note=Loop between two helices); that stretch reads SLQP. Positions 576 to 578 form an intramembrane region, helical; it reads SLY. Y578 lines the chloride pocket. The Cytoplasmic segment spans residues 579 to 976; that stretch reads DSIIQVKKLP…DEEDEDELIL (398 aa). The region spanning 609-668 is the CBS 1 domain; the sequence is MVRDVKFVSATCTYGELRTLLQTTTVKTLPLVDSKDSMILLGSVERSELQSLLQRHLGPE. The tract at residues 707-759 is disordered; sequence DEDEDEDLSGKPELPPLPPPHPLPSAPLSSEESNGPLPSHKQQPEAPEPADQR. Over residues 719–731 the composition is skewed to pro residues; the sequence is ELPPLPPPHPLPS. The CBS 2 domain maps to 816–871; the sequence is IDQSPFQLVEQTSLHKTHTLFSLLGLHLAYVTSMGKLRGVLALEELQKAIEGHTKS. Residues 872 to 976 form a disordered region; the sequence is GVQLRPPLAS…DEEDEDELIL (105 aa). S881 is subject to Phosphoserine. A compositionally biased stretch (pro residues) spans 914–925; the sequence is SPEPPAPSPSPA. Acidic residues-rich tracts occupy residues 938-955 and 967-976; these read ELEE…EELA and DEEDEDELIL.

The protein belongs to the chloride channel (TC 2.A.49) family. ClC-1/CLCN1 subfamily. Homodimer.

Its subcellular location is the cell membrane. It is found in the sarcolemma. It localises to the T-tubule. It catalyses the reaction chloride(in) = chloride(out). It carries out the reaction thiocyanate(in) = thiocyanate(out). The catalysed reaction is bromide(in) = bromide(out). The enzyme catalyses nitrate(in) = nitrate(out). It catalyses the reaction iodide(out) = iodide(in). Its activity is regulated as follows. Modulated by membrane voltage with depolarization favouring channel opening and hyperpolarization favouring channel closure. Inhibited by acidic pH and ATP binding due to a shift of voltage dependence of common gating to more positive voltages. Inhibited by 9-anthracene-carboxylic. In terms of biological role, voltage-gated chloride channel involved in skeletal muscle excitability. Generates most of the plasma membrane chloride conductance in skeletal muscle fibers, stabilizes the resting membrane potential and contributes to the repolarization phase during action potential firing. Forms a homodimeric channel where each subunit has its own ion conduction pathway. Conducts double-barreled currents controlled by two types of gates, two fast glutamate gates that control each subunit independently and a slow common gate that opens and shuts off both subunits simultaneously. Has a significant open probability at muscle resting potential and is further activated upon membrane depolarization. Permeable to small monovalent anions with ion selectivity for chloride &gt; thiocyanate &gt; bromide &gt; nitrate &gt; iodide. The chain is Chloride channel protein 1 (CLCN1) from Canis lupus familiaris (Dog).